The primary structure comprises 113 residues: Large ribosomal subunit protein uL24 (113 aa).

The interval H48–M70 is disordered.

It belongs to the universal ribosomal protein uL24 family. Part of the 50S ribosomal subunit.

One of two assembly initiator proteins, it binds directly to the 5'-end of the 23S rRNA, where it nucleates assembly of the 50S subunit. In terms of biological role, one of the proteins that surrounds the polypeptide exit tunnel on the outside of the subunit. The sequence is that of Large ribosomal subunit protein uL24 from Tropheryma whipplei (strain TW08/27) (Whipple's bacillus).